A 159-amino-acid polypeptide reads, in one-letter code: Protein RseC (159 aa).

Over 1 to 72 (MIKEWATVVS…QKVELGIAEG (72 aa)) the chain is Cytoplasmic. The helical transmembrane segment at 73-95 (SLLSSALLVYMSPLVGLFLIASL) threads the bilayer. Residues 96 to 98 (FQL) lie on the Periplasmic side of the membrane. A helical membrane pass occupies residues 99-121 (LFASDVAALCGAILGGIGGFLIA). Residues 122–159 (RGYSRKFAARAEWQPIILSVALPPGLVRFETSSEDASQ) lie on the Cytoplasmic side of the membrane.

Belongs to the RseC family.

It localises to the cell inner membrane. Its function is as follows. May play a role in reduction of the SoxR iron-sulfur cluster. May work together with the RsxABCDGE complex. The protein is Protein RseC of Escherichia coli (strain K12).